The sequence spans 141 residues: Hemoglobin subunit alpha (141 aa).

Residues 1-141 enclose the Globin domain; it reads VLSAADKTNV…VSTVLTSKYR (141 aa). A Phosphoserine modification is found at S3. K7 is modified (N6-succinyllysine). T8 is subject to Phosphothreonine. K11 carries the post-translational modification N6-succinyllysine. N6-acetyllysine; alternate is present on K16. K16 carries the post-translational modification N6-succinyllysine; alternate. Phosphotyrosine is present on Y24. Phosphoserine is present on S35. Position 40 is an N6-succinyllysine (K40). At S49 the chain carries Phosphoserine. An O2-binding site is contributed by H58. Residue H87 coordinates heme b. S102 is modified (phosphoserine). T108 is modified (phosphothreonine). Phosphoserine is present on residues S124 and S131. A phosphothreonine mark is found at T134 and T137. S138 bears the Phosphoserine mark.

It belongs to the globin family. As to quaternary structure, heterotetramer of two alpha chains and two beta chains. In terms of tissue distribution, red blood cells.

Functionally, involved in oxygen transport from the lung to the various peripheral tissues. This chain is Hemoglobin subunit alpha, found in Tamiasciurus hudsonicus (American red squirrel).